Reading from the N-terminus, the 484-residue chain is Sialidase-4 (484 aa).

The short motif at 22–25 is the FRIP motif element; it reads YRVP. Substrate-binding residues include arginine 23 and arginine 43. Residues aspartate 47 and aspartate 48 each act as proton acceptor in the active site. The BNR 1 repeat unit spans residues 127–138; it reads VASRDAGLSWGS. Positions 177 and 179 each coordinate substrate. One copy of the BNR 2 repeat lies at 200 to 211; sequence FYSDDHGRTWRC. Substrate contacts are provided by glutamate 222 and arginine 242. The stretch at 251–262 is one BNR 3 repeat; that stretch reads ALSTDEGTSFLP. Residues 284-357 form a disordered region; it reads PAPAPNRPRD…GPRPGVSGDV (74 aa). Residues 336-345 are compositionally biased toward low complexity; it reads RLQPRGDGPR. A substrate-binding site is contributed by arginine 389. Catalysis depends on tyrosine 419, which acts as the Nucleophile. Glutamate 440 is an active-site residue.

Belongs to the glycosyl hydrolase 33 family. N-glycosylated. In terms of tissue distribution, predominant form in liver. Also expressed in brain, kidney and colon. Highly expressed in brain and at lower levels in kidney and liver.

Its subcellular location is the cell membrane. It localises to the endoplasmic reticulum membrane. The protein localises to the microsome membrane. It is found in the mitochondrion membrane. The protein resides in the cell projection. Its subcellular location is the neuron projection. It localises to the mitochondrion inner membrane. The protein localises to the mitochondrion outer membrane. It is found in the lysosome lumen. The catalysed reaction is Hydrolysis of alpha-(2-&gt;3)-, alpha-(2-&gt;6)-, alpha-(2-&gt;8)- glycosidic linkages of terminal sialic acid residues in oligosaccharides, glycoproteins, glycolipids, colominic acid and synthetic substrates.. It catalyses the reaction a ganglioside GM3 + H2O = a beta-D-galactosyl-(1-&gt;4)-beta-D-glucosyl-(1&lt;-&gt;1)-ceramide + N-acetylneuraminate. The enzyme catalyses a ganglioside GM3 (d18:1(4E)) + H2O = a beta-D-Gal-(1-&gt;4)-beta-D-Glc-(1&lt;-&gt;1)-Cer(d18:1(4E)) + N-acetylneuraminate. It carries out the reaction a ganglioside GM2 + H2O = a ganglioside GA2 + N-acetylneuraminate. The catalysed reaction is a ganglioside GM2 (d18:1(4E)) + H2O = a ganglioside GA2 (d18:1(4E)) + N-acetylneuraminate. It catalyses the reaction a ganglioside GD1a + H2O = a ganglioside GM1 + N-acetylneuraminate. The enzyme catalyses a ganglioside GD1a (d18:1(4E)) + H2O = a ganglioside GM1 (d18:1(4E)) + N-acetylneuraminate. It carries out the reaction a ganglioside GD3 + H2O = a ganglioside GM3 + N-acetylneuraminate. The catalysed reaction is a ganglioside GD3 (d18:1(4E)) + H2O = a ganglioside GM3 (d18:1(4E)) + N-acetylneuraminate. Functionally, exo-alpha-sialidase that catalyzes the hydrolytic cleavage of the terminal sialic acid (N-acetylneuraminic acid, Neu5Ac) of a glycan moiety in the catabolism of glycolipids, glycoproteins and oligosacharides. Efficiently hydrolyzes gangliosides including alpha-(2-&gt;3)-sialylated GD1a and GM3 and alpha-(2-&gt;8)-sialylated GD3. Hydrolyzes poly-alpha-(2-&gt;8)-sialylated neural cell adhesion molecule NCAM1 likely at growth cones, suppressing neurite outgrowth in hippocampal neurons. May desialylate sialyl Lewis A and X antigens at the cell surface, down-regulating these glycan epitopes recognized by SELE/E selectin in the initiation of cell adhesion and extravasation. Has sialidase activity toward mucin, fetuin and sialyllactose. The protein is Sialidase-4 (NEU4) of Homo sapiens (Human).